The primary structure comprises 234 residues: 2-C-methyl-D-erythritol 4-phosphate cytidylyltransferase (234 aa).

The protein belongs to the IspD/TarI cytidylyltransferase family. IspD subfamily.

The catalysed reaction is 2-C-methyl-D-erythritol 4-phosphate + CTP + H(+) = 4-CDP-2-C-methyl-D-erythritol + diphosphate. It participates in isoprenoid biosynthesis; isopentenyl diphosphate biosynthesis via DXP pathway; isopentenyl diphosphate from 1-deoxy-D-xylulose 5-phosphate: step 2/6. Its function is as follows. Catalyzes the formation of 4-diphosphocytidyl-2-C-methyl-D-erythritol from CTP and 2-C-methyl-D-erythritol 4-phosphate (MEP). This Shewanella sediminis (strain HAW-EB3) protein is 2-C-methyl-D-erythritol 4-phosphate cytidylyltransferase.